A 154-amino-acid polypeptide reads, in one-letter code: Myoglobin (154 aa).

The Globin domain maps to 2-148 (GLSDGEWHLV…FRNDIAAKIK (147 aa)). Residue Ser4 is modified to Phosphoserine. His65 is a nitrite binding site. His65 contacts O2. Thr68 is subject to Phosphothreonine. His94 contacts heme b.

It belongs to the globin family. Monomeric.

The protein localises to the cytoplasm. It localises to the sarcoplasm. It carries out the reaction Fe(III)-heme b-[protein] + nitric oxide + H2O = Fe(II)-heme b-[protein] + nitrite + 2 H(+). It catalyses the reaction H2O2 + AH2 = A + 2 H2O. Its function is as follows. Monomeric heme protein which primary function is to store oxygen and facilitate its diffusion within muscle tissues. Reversibly binds oxygen through a pentacoordinated heme iron and enables its timely and efficient release as needed during periods of heightened demand. Depending on the oxidative conditions of tissues and cells, and in addition to its ability to bind oxygen, it also has a nitrite reductase activity whereby it regulates the production of bioactive nitric oxide. Under stress conditions, like hypoxia and anoxia, it also protects cells against reactive oxygen species thanks to its pseudoperoxidase activity. This is Myoglobin (MB) from Pusa sibirica (Baikal seal).